A 284-amino-acid chain; its full sequence is Bifunctional protein FolD (284 aa).

NADP(+) is bound by residues 166–168 and Ser-191; that span reads GRS.

The protein belongs to the tetrahydrofolate dehydrogenase/cyclohydrolase family. In terms of assembly, homodimer.

The enzyme catalyses (6R)-5,10-methylene-5,6,7,8-tetrahydrofolate + NADP(+) = (6R)-5,10-methenyltetrahydrofolate + NADPH. The catalysed reaction is (6R)-5,10-methenyltetrahydrofolate + H2O = (6R)-10-formyltetrahydrofolate + H(+). The protein operates within one-carbon metabolism; tetrahydrofolate interconversion. Functionally, catalyzes the oxidation of 5,10-methylenetetrahydrofolate to 5,10-methenyltetrahydrofolate and then the hydrolysis of 5,10-methenyltetrahydrofolate to 10-formyltetrahydrofolate. The chain is Bifunctional protein FolD from Delftia acidovorans (strain DSM 14801 / SPH-1).